A 252-amino-acid polypeptide reads, in one-letter code: 3-dehydroquinate dehydratase (252 aa).

3-dehydroquinate contacts are provided by residues Ser-21, 46 to 48 (EWR), and Arg-82. His-143 serves as the catalytic Proton donor/acceptor. Lys-170 acts as the Schiff-base intermediate with substrate in catalysis. 3-dehydroquinate is bound by residues Arg-213, Ser-232, and Gln-236.

It belongs to the type-I 3-dehydroquinase family. As to quaternary structure, homodimer.

It carries out the reaction 3-dehydroquinate = 3-dehydroshikimate + H2O. It functions in the pathway metabolic intermediate biosynthesis; chorismate biosynthesis; chorismate from D-erythrose 4-phosphate and phosphoenolpyruvate: step 3/7. Its function is as follows. Involved in the third step of the chorismate pathway, which leads to the biosynthesis of aromatic amino acids. Catalyzes the cis-dehydration of 3-dehydroquinate (DHQ) and introduces the first double bond of the aromatic ring to yield 3-dehydroshikimate. The sequence is that of 3-dehydroquinate dehydratase from Salmonella agona (strain SL483).